A 162-amino-acid polypeptide reads, in one-letter code: Cytochrome c-type biogenesis protein CcmE (162 aa).

Residues 1-8 are Cytoplasmic-facing; that stretch reads MNPRRKKR. A helical; Signal-anchor for type II membrane protein transmembrane segment spans residues 9-29; sequence LALVVGLIGGVAAVASLLLYA. The Periplasmic segment spans residues 30–162; that stretch reads LNTNLNLFYT…YTETQKGGSR (133 aa). Positions 131 and 135 each coordinate heme.

Belongs to the CcmE/CycJ family.

The protein resides in the cell inner membrane. Its function is as follows. Heme chaperone required for the biogenesis of c-type cytochromes. Transiently binds heme delivered by CcmC and transfers the heme to apo-cytochromes in a process facilitated by CcmF and CcmH. This is Cytochrome c-type biogenesis protein CcmE from Shewanella amazonensis (strain ATCC BAA-1098 / SB2B).